A 494-amino-acid polypeptide reads, in one-letter code: MATFKDACFHYRRVTKLNRELLRIGANSVWTPVSSNKIKIKGWCIECCQLTGLTFCHGCSLAHVCQWCIQNKRCFLDNEPHLLKLRTFESPITKEKLQCIINLYELLFPINHGVINKFKKTIKQRKCRNEFDKSWYNQLLLPITLNAAVFKFHSRDVYVFGFYEGSSPCIDLPYRLVNCIDLYDKLLLDQVNFERMSSLPDNLQSIYANKYFKLSRLPSMKLKRIYYSDFSKQNLINKYKTKSRIVLRNLTEFTWDSQTDLHHDLINDKDKILAALSTSSLKQFETHDLNLGRIKADIFELGHHCKPNYISSNHWQPASKISKCKWCNVKYAFRDMDWKMESMYNELLSFIQSCYKSNVNVGHCSSIEKAYPLVKDILWHSITEYIDQTVEKLFNTMNPVQVNEQQVIKFCWQIDIALYMHIKMILETEALPFTFTLNQFNSIIKGIVNQWCDVAELDHLPLCTEQTDALVKLEEEGKLSEEYELLISDSEDDD.

Residues 1 to 83 form an RNA-binding region; sequence MATFKDACFH…CFLDNEPHLL (83 aa). The tract at residues 44–81 is zinc-binding domain; it reads CIECCQLTGLTFCHGCSLAHVCQWCIQNKRCFLDNEPH. The important for cytoskeleton localization stretch occupies residues 84–178; that stretch reads KLRTFESPIT…CIDLPYRLVN (95 aa). The interaction with host IRF3 stretch occupies residues 320-494; sequence KISKCKWCNV…LLISDSEDDD (175 aa). Residues 485–488 carry the pLxIS motif motif; it reads LLIS.

This sequence belongs to the rotavirus NSP1 family. Interacts (via C-terminus) with host IRF3; this interaction leads to IRF3 degradation. Interacts with host IRF7; this interaction leads to IRF7 degradation. Interacts with host CUL1 and CUL3.

It localises to the host cytoplasm. The protein localises to the host cytoskeleton. Its function is as follows. Plays a role in the inhibition of host innate immunity by inducing the degradation of key host factors required to activate interferon production such as IRF3, IRF5 or IRF7. Associates with components of cullin RING ligases (CRLs) including CUL1 or CUL3, which are essential multisubunit ubiquitination complexes, to modulate their activities. In Rotavirus A (strain RVA/Monkey/United States/RRV/1975/G3P5B[3]) (RV-A), this protein is Non-structural protein 1.